A 325-amino-acid polypeptide reads, in one-letter code: Glutarate 2-hydroxylase (325 aa).

Positions 160, 162, and 292 each coordinate Fe cation.

It belongs to the glutarate hydroxylase family. In terms of assembly, homotetramer. The cofactor is Fe(2+).

It catalyses the reaction glutarate + 2-oxoglutarate + O2 = (S)-2-hydroxyglutarate + succinate + CO2. The protein operates within amino-acid degradation. Its function is as follows. Acts as an alpha-ketoglutarate-dependent dioxygenase catalyzing hydroxylation of glutarate (GA) to L-2-hydroxyglutarate (L2HG). Functions in a L-lysine degradation pathway that proceeds via cadaverine, glutarate and L-2-hydroxyglutarate. The protein is Glutarate 2-hydroxylase of Salmonella newport (strain SL254).